Consider the following 942-residue polypeptide: Protein translocase subunit SecA (942 aa).

Residues Q90, 108–112 (GEGKT), and D509 contribute to the ATP site.

It belongs to the SecA family. As to quaternary structure, monomer and homodimer. Part of the essential Sec protein translocation apparatus which comprises SecA, SecYEG and auxiliary proteins SecDF. Other proteins may also be involved.

Its subcellular location is the cell inner membrane. The protein resides in the cellular thylakoid membrane. The protein localises to the cytoplasm. It catalyses the reaction ATP + H2O + cellular proteinSide 1 = ADP + phosphate + cellular proteinSide 2.. In terms of biological role, part of the Sec protein translocase complex. Interacts with the SecYEG preprotein conducting channel. Has a central role in coupling the hydrolysis of ATP to the transfer of proteins into and across the cell membrane, serving as an ATP-driven molecular motor driving the stepwise translocation of polypeptide chains across the membrane. Functionally, probably participates in protein translocation into and across both the cytoplasmic and thylakoid membranes in cyanobacterial cells. In Prochlorococcus marinus (strain NATL2A), this protein is Protein translocase subunit SecA.